Reading from the N-terminus, the 433-residue chain is Glutamate-1-semialdehyde 2,1-aminomutase (433 aa).

Lys273 carries the post-translational modification N6-(pyridoxal phosphate)lysine.

The protein belongs to the class-III pyridoxal-phosphate-dependent aminotransferase family. HemL subfamily. Homodimer. The cofactor is pyridoxal 5'-phosphate.

The protein resides in the cytoplasm. It carries out the reaction (S)-4-amino-5-oxopentanoate = 5-aminolevulinate. It functions in the pathway porphyrin-containing compound metabolism; protoporphyrin-IX biosynthesis; 5-aminolevulinate from L-glutamyl-tRNA(Glu): step 2/2. This chain is Glutamate-1-semialdehyde 2,1-aminomutase, found in Ralstonia pickettii (strain 12J).